We begin with the raw amino-acid sequence, 1690 residues long: DNA-directed RNA polymerase subunit beta' (1690 aa).

Zn(2+)-binding residues include Cys-63, Cys-65, Cys-78, and Cys-81. Positions 753, 755, and 757 each coordinate Mg(2+). Zn(2+) is bound by residues Cys-1107, Cys-1295, Cys-1302, and Cys-1305.

Belongs to the RNA polymerase beta' chain family. In terms of assembly, the RNAP catalytic core consists of 2 alpha, 1 beta, 1 beta' and 1 omega subunit. When a sigma factor is associated with the core the holoenzyme is formed, which can initiate transcription. Requires Mg(2+) as cofactor. Zn(2+) serves as cofactor.

The catalysed reaction is RNA(n) + a ribonucleoside 5'-triphosphate = RNA(n+1) + diphosphate. DNA-dependent RNA polymerase catalyzes the transcription of DNA into RNA using the four ribonucleoside triphosphates as substrates. This is DNA-directed RNA polymerase subunit beta' from Thermotoga petrophila (strain ATCC BAA-488 / DSM 13995 / JCM 10881 / RKU-1).